Here is a 491-residue protein sequence, read N- to C-terminus: Conidiogenone synthase PchP450 (491 aa).

A helical transmembrane segment spans residues 2 to 22 (LLLWFGFFSFVCGLVIYRLQF). Cys-430 is a binding site for heme.

It belongs to the cytochrome P450 family. The cofactor is heme.

The protein localises to the membrane. It participates in secondary metabolite biosynthesis; terpenoid biosynthesis. Functionally, cytochrome P450 monooxygenase; part of the gene cluster that mediates the biosynthesis of conidiogenone, a diterpene known to induce the conidiation. The bifunctional terpene synthase PrDS converts isopentenyl diphosphate (IPP) and dimethylallyl diphosphate (DMAPP) into deoxyconidiogenol. The C-terminal prenyltransferase (PT) domain of PrDS catalyzes formation of GGPP, whereas the N-terminal terpene cyclase (TC) domain catalyzes the cyclization of GGPP into deoxyconidiogenol. The cytochrome P450 monooxygenase PrP450 then catalyzes two rounds of oxidation to furnish conidiogenone. This chain is Conidiogenone synthase PchP450, found in Penicillium rubens (strain ATCC 28089 / DSM 1075 / NRRL 1951 / Wisconsin 54-1255) (Penicillium chrysogenum).